Consider the following 206-residue polypeptide: Pyridoxine/pyridoxamine 5'-phosphate oxidase (206 aa).

Residues 53-58 (RMVLLK), 68-69 (YT), Lys-75, and Gln-97 each bind FMN. Lys-58 lines the substrate pocket. Residues Tyr-115, Arg-119, and Ser-123 each contribute to the substrate site. Residues 132–133 (QS) and Trp-177 each bind FMN. 183–185 (RLH) contacts substrate. Arg-187 is a binding site for FMN.

Belongs to the pyridoxamine 5'-phosphate oxidase family. As to quaternary structure, homodimer. Requires FMN as cofactor.

The catalysed reaction is pyridoxamine 5'-phosphate + O2 + H2O = pyridoxal 5'-phosphate + H2O2 + NH4(+). The enzyme catalyses pyridoxine 5'-phosphate + O2 = pyridoxal 5'-phosphate + H2O2. It participates in cofactor metabolism; pyridoxal 5'-phosphate salvage; pyridoxal 5'-phosphate from pyridoxamine 5'-phosphate: step 1/1. The protein operates within cofactor metabolism; pyridoxal 5'-phosphate salvage; pyridoxal 5'-phosphate from pyridoxine 5'-phosphate: step 1/1. Its function is as follows. Catalyzes the oxidation of either pyridoxine 5'-phosphate (PNP) or pyridoxamine 5'-phosphate (PMP) into pyridoxal 5'-phosphate (PLP). This is Pyridoxine/pyridoxamine 5'-phosphate oxidase from Sinorhizobium fredii (strain NBRC 101917 / NGR234).